The following is a 106-amino-acid chain: Iron-sulfur cluster assembly protein CyaY (106 aa).

This sequence belongs to the frataxin family.

Functionally, involved in iron-sulfur (Fe-S) cluster assembly. May act as a regulator of Fe-S biogenesis. The sequence is that of Iron-sulfur cluster assembly protein CyaY from Shigella flexneri.